The sequence spans 92 residues: Small ribosomal subunit protein uS19 (92 aa).

The protein belongs to the universal ribosomal protein uS19 family.

Functionally, protein S19 forms a complex with S13 that binds strongly to the 16S ribosomal RNA. In Rippkaea orientalis (strain PCC 8801 / RF-1) (Cyanothece sp. (strain PCC 8801)), this protein is Small ribosomal subunit protein uS19.